The following is a 374-amino-acid chain: bZIP transcription factor TRAB1 (374 aa).

The segment covering 1–13 has biased composition (basic and acidic residues); it reads MDLKDGGGSERRG. 2 disordered regions span residues 1–23 and 117–142; these read MDLK…AGAA and ASPG…QPTL. Over residues 14–23 the composition is skewed to low complexity; it reads AAAGAGAGAA. The region spanning 286–349 is the bZIP domain; that stretch reads VERRQRRMIK…KNFFPEMQKN (64 aa). Residues 288 to 307 form a basic motif region; sequence RRQRRMIKNRESAARSRARK. A leucine-zipper region spans residues 314–335; sequence LEAEVQKLKEQNMELQKKQEEI.

The protein belongs to the bZIP family. In terms of assembly, interacts with VP1 (via N-terminus). In terms of tissue distribution, expressed in roots, leaves and embryos.

Its subcellular location is the nucleus. Transcription activator that mediates abscisic acid (ABA) signaling. Binds specifically to the ABA-responsive element (ABRE) of the EMP1 and RAB16A gene promoters. The chain is bZIP transcription factor TRAB1 from Oryza sativa subsp. japonica (Rice).